The primary structure comprises 318 residues: Ribose-phosphate pyrophosphokinase 1 (318 aa).

Residues 43–45 and 102–103 each bind ATP; these read DGE and RQ. Histidine 136 and aspartate 176 together coordinate Mg(2+). Residue lysine 199 is part of the active site. D-ribose 5-phosphate is bound by residues arginine 201, aspartate 225, and 229-233; that span reads DTAGT.

It belongs to the ribose-phosphate pyrophosphokinase family. Class I subfamily. As to quaternary structure, homohexamer. Requires Mg(2+) as cofactor.

It is found in the cytoplasm. It carries out the reaction D-ribose 5-phosphate + ATP = 5-phospho-alpha-D-ribose 1-diphosphate + AMP + H(+). Its pathway is metabolic intermediate biosynthesis; 5-phospho-alpha-D-ribose 1-diphosphate biosynthesis; 5-phospho-alpha-D-ribose 1-diphosphate from D-ribose 5-phosphate (route I): step 1/1. Its function is as follows. Involved in the biosynthesis of the central metabolite phospho-alpha-D-ribosyl-1-pyrophosphate (PRPP) via the transfer of pyrophosphoryl group from ATP to 1-hydroxyl of ribose-5-phosphate (Rib-5-P). This is Ribose-phosphate pyrophosphokinase 1 from Listeria innocua serovar 6a (strain ATCC BAA-680 / CLIP 11262).